Reading from the N-terminus, the 303-residue chain is RING finger protein 148 (303 aa).

Residues 1 to 34 (MSLLRITSSAHSSASSRLWRLGIFLLLSLPDSKG) form the signal peptide. The N-linked (GlcNAc...) asparagine glycan is linked to asparagine 43. Residues 65 to 167 (HSPLERVSGV…LKGMELLHLI (103 aa)) form the PA domain. The helical transmembrane segment at 186 to 208 (WLSHYIMSLFTFLTATVAYLFLY) threads the bilayer. The RING-type; atypical zinc finger occupies 256–297 (CVVCFDIYKPQDVVRILTCKHIFHKACIDPWLLAHRTCPMCK).

The protein localises to the membrane. This chain is RING finger protein 148 (RNF148), found in Bos taurus (Bovine).